Reading from the N-terminus, the 161-residue chain is 2-C-methyl-D-erythritol 2,4-cyclodiphosphate synthase (161 aa).

A divalent metal cation contacts are provided by Asp-10 and His-12. Residues 10-12 (DVH) and 36-37 (HS) each bind 4-CDP-2-C-methyl-D-erythritol 2-phosphate. Residue His-44 participates in a divalent metal cation binding. 4-CDP-2-C-methyl-D-erythritol 2-phosphate contacts are provided by residues 58 to 60 (DIG), 63 to 67 (FPDTD), 102 to 108 (AQAPKMA), 134 to 137 (TTTE), Phe-141, and Arg-144.

This sequence belongs to the IspF family. As to quaternary structure, homotrimer. The cofactor is a divalent metal cation.

It carries out the reaction 4-CDP-2-C-methyl-D-erythritol 2-phosphate = 2-C-methyl-D-erythritol 2,4-cyclic diphosphate + CMP. It participates in isoprenoid biosynthesis; isopentenyl diphosphate biosynthesis via DXP pathway; isopentenyl diphosphate from 1-deoxy-D-xylulose 5-phosphate: step 4/6. In terms of biological role, involved in the biosynthesis of isopentenyl diphosphate (IPP) and dimethylallyl diphosphate (DMAPP), two major building blocks of isoprenoid compounds. Catalyzes the conversion of 4-diphosphocytidyl-2-C-methyl-D-erythritol 2-phosphate (CDP-ME2P) to 2-C-methyl-D-erythritol 2,4-cyclodiphosphate (ME-CPP) with a corresponding release of cytidine 5-monophosphate (CMP). The polypeptide is 2-C-methyl-D-erythritol 2,4-cyclodiphosphate synthase (Shewanella baltica (strain OS155 / ATCC BAA-1091)).